A 112-amino-acid chain; its full sequence is Integration host factor subunit alpha (112 aa).

The protein belongs to the bacterial histone-like protein family. Heterodimer of an alpha and a beta chain.

In terms of biological role, this protein is one of the two subunits of integration host factor, a specific DNA-binding protein that functions in genetic recombination as well as in transcriptional and translational control. The chain is Integration host factor subunit alpha from Sinorhizobium fredii (strain NBRC 101917 / NGR234).